The primary structure comprises 414 residues: Serine hydroxymethyltransferase (414 aa).

(6S)-5,6,7,8-tetrahydrofolate contacts are provided by residues L116 and 120–122; that span reads GHL. An N6-(pyridoxal phosphate)lysine modification is found at K224. Residues E240 and 348-350 each bind (6S)-5,6,7,8-tetrahydrofolate; that span reads SPF.

This sequence belongs to the SHMT family. As to quaternary structure, homodimer. The cofactor is pyridoxal 5'-phosphate.

It localises to the cytoplasm. The enzyme catalyses (6R)-5,10-methylene-5,6,7,8-tetrahydrofolate + glycine + H2O = (6S)-5,6,7,8-tetrahydrofolate + L-serine. Its pathway is one-carbon metabolism; tetrahydrofolate interconversion. It participates in amino-acid biosynthesis; glycine biosynthesis; glycine from L-serine: step 1/1. In terms of biological role, catalyzes the reversible interconversion of serine and glycine with tetrahydrofolate (THF) serving as the one-carbon carrier. This reaction serves as the major source of one-carbon groups required for the biosynthesis of purines, thymidylate, methionine, and other important biomolecules. Also exhibits THF-independent aldolase activity toward beta-hydroxyamino acids, producing glycine and aldehydes, via a retro-aldol mechanism. This chain is Serine hydroxymethyltransferase, found in Campylobacter jejuni subsp. jejuni serotype O:2 (strain ATCC 700819 / NCTC 11168).